The sequence spans 1643 residues: DNA-directed RNA polymerase subunit beta' (1643 aa).

Zn(2+) contacts are provided by C64, C66, C79, and C82. Mg(2+) contacts are provided by D684, D686, and D688. The Zn(2+) site is built by C1046, C1239, C1246, and C1249.

This sequence belongs to the RNA polymerase beta' chain family. The RNAP catalytic core consists of 2 alpha, 1 beta, 1 beta' and 1 omega subunit. When a sigma factor is associated with the core the holoenzyme is formed, which can initiate transcription. It depends on Mg(2+) as a cofactor. Requires Zn(2+) as cofactor.

The catalysed reaction is RNA(n) + a ribonucleoside 5'-triphosphate = RNA(n+1) + diphosphate. Its function is as follows. DNA-dependent RNA polymerase catalyzes the transcription of DNA into RNA using the four ribonucleoside triphosphates as substrates. This is DNA-directed RNA polymerase subunit beta' from Petrotoga mobilis (strain DSM 10674 / SJ95).